The sequence spans 68 residues: Molybdenum-pterin-binding protein 3 (68 aa).

The Mop domain maps to 2 to 68 (SISARNQLKG…IKSTDVMILA (67 aa)).

In terms of biological role, binds one mole of molybdenum per mole of protein and contains a pterin. This Clostridium pasteurianum protein is Molybdenum-pterin-binding protein 3 (mopIII).